The sequence spans 23 residues: Basic phospholipase A2 homolog (23 aa).

Contains 7 disulfide bonds. As to expression, expressed by the venom gland.

The protein localises to the secreted. The sequence is that of Basic phospholipase A2 homolog from Trimeresurus stejnegeri (Chinese green tree viper).